We begin with the raw amino-acid sequence, 554 residues long: Protein SINE2 (554 aa).

The interval 17–290 (DKDPDSHKTA…MAAHETMRQA (274 aa)) is ARMADILLO-type fold. 3 disordered regions span residues 306 to 332 (CKPRNSLSGSVKSTSSLREHDGSVYSR), 411 to 442 (NESVCSRTNRSRSSRRNTKKRQSGDICSKHHR), and 465 to 487 (ETSSSSSIYDTSGTTTPTNTTED). The segment covering 311–321 (SLSGSVKSTSS) has biased composition (low complexity). Positions 322-332 (LREHDGSVYSR) are enriched in basic and acidic residues. The segment covering 419 to 431 (NRSRSSRRNTKKR) has biased composition (basic residues). Residues 465–485 (ETSSSSSIYDTSGTTTPTNTT) show a composition bias toward low complexity. The KASH domain occupies 509–554 (LDPRLGRSKGVLKLGLSVFSIAVAGFASFMWMYLQDDMMPPHLVPT). The chain crosses the membrane as a helical span at residues 522–542 (LGLSVFSIAVAGFASFMWMYL). The short motif at 551 to 554 (LVPT) is the Required for nuclear localization element.

As to quaternary structure, interacts with SUN1 and SUN2. As to expression, expressed in epidermal cells, mesophyll cells, trichomes and root cells.

It localises to the nucleus membrane. Functionally, plays a role in innate immunity against the oomycete pathogen A.arabidopsidis (Hpa). This chain is Protein SINE2, found in Arabidopsis thaliana (Mouse-ear cress).